The primary structure comprises 291 residues: Trimeric intracellular cation channel type B (291 aa).

At 1 to 16 the chain is on the lumenal side; sequence MEYPWDDLTLAFSRTS. Residues 17-33 form a helical membrane-spanning segment; that stretch reads MFPFFDIAHYLVSVMAL. Topologically, residues 34-47 are cytoplasmic; sequence KQRPGAVAAAWSNP. A helical membrane pass occupies residues 48 to 69; sequence LSSWLSAMLHCFGGGILSCILL. The Lumenal portion of the chain corresponds to 70–80; the sequence is AEPPLKFLTNH. A helical membrane pass occupies residues 81-99; that stretch reads TNILLASSIWYIVFFCPRD. The Cytoplasmic segment spans residues 100-103; sequence LVSQ. Residues 104 to 122 traverse the membrane as a helical segment; sequence GYSYQPIQLLAAGMKEVTR. Residues Lys118 and Arg122 each coordinate a 1,2-diacyl-sn-glycero-3-phospho-(1D-myo-inositol-4,5-bisphosphate). The Lumenal segment spans residues 123 to 138; the sequence is TWKIVGGVAHANGYYR. Residues 139 to 156 form a helical membrane-spanning segment; sequence NGWIVMIAVGWARGAGGA. The Cytoplasmic segment spans residues 157-179; that stretch reads IITACEQLLKGDWKPEGDEWLKM. Residues 180-197 traverse the membrane as a helical segment; sequence SFPCKVTLLGSIMFTFQH. The Lumenal portion of the chain corresponds to 198-206; sequence TRHLAISKH. The chain crosses the membrane as a helical span at residues 207–225; sequence DLMFLYTIFLVTIKVTMMM. Topologically, residues 226-291 are cytoplasmic; sequence TKDAAVTLTP…SAKRHAKKED (66 aa). Positions 254–291 are disordered; sequence LSEKKAEVKPSSNGSASSASKRGTEPPSSAKRHAKKED. The span at 264–273 shows a compositional bias: low complexity; sequence SSNGSASSAS.

This sequence belongs to the TMEM38 family. In terms of assembly, homotrimer; conformation seems to be controled by binding to diacylglycerol (DAG).

The protein localises to the endoplasmic reticulum membrane. It catalyses the reaction K(+)(in) = K(+)(out). Its activity is regulated as follows. Channel activity is activated by increased cytosolic Ca(2+) levels and blocked by luminal high Ca(2+) levels. In terms of biological role, intracellular monovalent cation channel required for maintenance of rapid intracellular calcium release. Acts as a potassium counter-ion channel that functions in synchronization with calcium release from intracellular stores. Activated by increased cytosolic Ca(2+) levels. This is Trimeric intracellular cation channel type B (Tmem38b) from Rattus norvegicus (Rat).